A 463-amino-acid chain; its full sequence is MNVKSIALSAVIATSFLAAGAMASEKTEPRNEVYKDKFSKQYDSWHATDESKEVVDMLEKVPSLVVLWAGYGFAKDYNAPRGHMYAVTDVTNTLRTGAPKNAEDGPMPMACWSCKSPDVPRVIEEQGEDGYFSGKWAKGGPEIVNVLGCADCHEKGSSKLRMSRPFAERAMTTLNTPFDKASRKDKQSMVCAQCHVEYYFEKTAERPGFVKFPWDMGTTVEQMEVYYDSMEFSDWTHAVSKTPMLKAQHPGYETWKLGVHGQNNVSCVDCHMPKVTNDKGRKFTDHKVGNPFDRFEETCATCHSQSKEFMVKQVEESKQKAQDLKARVETQLVKAHFEAKAAWDAGATEVEMKPILMDIRHSQWRWDYATASHGASSHAPAEVLRILGTSLDKAADARVKLAQLLGAKGVKQPIAYPDTSTKAKAQAALGMNMKTMNAEKAEFKKTLVPKWKEEAKKREATYK.

The N-terminal stretch at methionine 1 to alanine 23 is a signal peptide. A heme c-binding site is contributed by histidine 83. The heme site is built by cysteine 111, cysteine 114, and lysine 115. Cysteine 149, cysteine 152, histidine 153, cysteine 191, cysteine 194, and histidine 195 together coordinate heme c. Residues glutamate 197, tyrosine 198, lysine 246, and glutamine 248 each contribute to the Ca(2+) site. Residue tyrosine 198 participates in substrate binding. Position 249 (histidine 249) interacts with substrate. Residues histidine 260, cysteine 267, cysteine 270, histidine 271, histidine 286, cysteine 299, cysteine 302, histidine 303, and histidine 378 each contribute to the heme c site.

The protein belongs to the cytochrome c-552 family. Ca(2+) serves as cofactor. Heme c is required as a cofactor.

Its subcellular location is the periplasm. It carries out the reaction 6 Fe(III)-[cytochrome c] + NH4(+) + 2 H2O = 6 Fe(II)-[cytochrome c] + nitrite + 8 H(+). It functions in the pathway nitrogen metabolism; nitrate reduction (assimilation). Its function is as follows. Catalyzes the reduction of nitrite to ammonia, consuming six electrons in the process. In Shewanella frigidimarina (strain NCIMB 400), this protein is Cytochrome c-552.